The following is a 432-amino-acid chain: Cyclin-A2 (432 aa).

N-acetylmethionine is present on Met-1. Position 5 is a phosphoserine (Ser-5). 2 disordered regions span residues 26–45 and 55–75; these read LQED…QQPR and SGNP…VAPL. Position 55 is a phosphoserine (Ser-55).

It belongs to the cyclin family. Cyclin AB subfamily. Interacts with the CDK1 and CDK2 protein kinases to form serine/threonine kinase holoenzyme complexes. Interacts with CDK1 (hyperphosphorylated form in G1 and underphosphorylated forms in S and G2). Interacts with CDK2; the interaction increases from G1 to G2. Interacts (associated with CDK2 but not with CDK1) with SCAPER; regulates the activity of CCNA2/CDK2 by transiently maintaining CCNA2 in the cytoplasm. Forms a ternary complex with CDK2 and CDKN1B; CDKN1B inhibits the kinase activity of CDK2 through conformational rearrangements. Interacts with INCA1. As to quaternary structure, (Microbial infection) Interacts with human cytomegalovirus protein UL32. Polyubiquitinated via 'Lys-11'-linked ubiquitin by the anaphase-promoting complex (APC/C), leading to its degradation by the proteasome. Deubiquitinated and stabilized by USP37 enables entry into S phase. Ubiquitinated during the G1 phase by the SCF(FBXO31) complex, leading to its proteasomal degradation.

It is found in the nucleus. The protein localises to the cytoplasm. Its function is as follows. Cyclin which controls both the G1/S and the G2/M transition phases of the cell cycle. Functions through the formation of specific serine/threonine protein kinase holoenzyme complexes with the cyclin-dependent protein kinases CDK1 or CDK2. The cyclin subunit confers the substrate specificity of these complexes and differentially interacts with and activates CDK1 and CDK2 throughout the cell cycle. This is Cyclin-A2 from Homo sapiens (Human).